The following is a 559-amino-acid chain: Polypeptide N-acetylgalactosaminyltransferase 1 (559 aa).

Topologically, residues 1 to 8 (MRKFAYCK) are cytoplasmic. A helical; Signal-anchor for type II membrane protein membrane pass occupies residues 9–28 (VVLATSLVWVLLDMFLLLYF). Over 29–559 (SECNKCEEKK…LRNVTLPEIF (531 aa)) the chain is Lumenal. N-linked (GlcNAc...) asparagine glycosylation is present at asparagine 95. 5 disulfide bridges follow: cysteine 106-cysteine 339, cysteine 330-cysteine 408, cysteine 442-cysteine 459, cysteine 482-cysteine 497, and cysteine 523-cysteine 540. The segment at 115 to 225 (LPTTSVVIVF…VGWLEPLLAR (111 aa)) is catalytic subdomain A. The substrate site is built by aspartate 156 and arginine 186. Mn(2+) contacts are provided by aspartate 209 and histidine 211. The segment at 285-347 (PVRTPTMAGG…TCSHVGHVFR (63 aa)) is catalytic subdomain B. Tryptophan 316 is a substrate binding site. Histidine 344 is a binding site for Mn(2+). Residues arginine 347 and tyrosine 352 each coordinate substrate. The Ricin B-type lectin domain maps to 429-551 (FSLGEIRNVE…GSRSQQWLLR (123 aa)). N-linked (GlcNAc...) asparagine glycosylation is present at asparagine 552.

Belongs to the glycosyltransferase 2 family. GalNAc-T subfamily. Mn(2+) serves as cofactor. Heart, brain, spleen, liver, skeletal muscle and kidney.

It localises to the golgi apparatus. The protein localises to the golgi stack membrane. The protein resides in the secreted. The catalysed reaction is L-seryl-[protein] + UDP-N-acetyl-alpha-D-galactosamine = a 3-O-[N-acetyl-alpha-D-galactosaminyl]-L-seryl-[protein] + UDP + H(+). It catalyses the reaction L-threonyl-[protein] + UDP-N-acetyl-alpha-D-galactosamine = a 3-O-[N-acetyl-alpha-D-galactosaminyl]-L-threonyl-[protein] + UDP + H(+). It participates in protein modification; protein glycosylation. Its function is as follows. Catalyzes the initial reaction in O-linked oligosaccharide biosynthesis, the transfer of an N-acetyl-D-galactosamine residue to a serine or threonine residue on the protein receptor. Has a broad spectrum of substrates such as apomucin-, MUC5AC-, MUC1- and MUC2-derived peptides. The protein is Polypeptide N-acetylgalactosaminyltransferase 1 of Rattus norvegicus (Rat).